The primary structure comprises 111 residues: MSDTLSRLAEVLEARKGAAPDSSYVASLYHKGLNKILEKVGEESVETILAAKDAAASGDCKDLIYETADLWFHSLVMLAALGQHPQAVLDELDRRFGLSGHAEKAARPQSE.

The protein belongs to the PRA-PH family.

It is found in the cytoplasm. It carries out the reaction 1-(5-phospho-beta-D-ribosyl)-ATP + H2O = 1-(5-phospho-beta-D-ribosyl)-5'-AMP + diphosphate + H(+). Its pathway is amino-acid biosynthesis; L-histidine biosynthesis; L-histidine from 5-phospho-alpha-D-ribose 1-diphosphate: step 2/9. This chain is Phosphoribosyl-ATP pyrophosphatase, found in Ectopseudomonas mendocina (strain ymp) (Pseudomonas mendocina).